The sequence spans 288 residues: Diaminopimelate epimerase (288 aa).

The substrate site is built by Asn14 and Asn67. Cys76 serves as the catalytic Proton donor. Substrate contacts are provided by residues 77-78 (GN), Asn166, Asn199, and 217-218 (ER). Cys226 acts as the Proton acceptor in catalysis. 227 to 228 (GT) contributes to the substrate binding site.

It belongs to the diaminopimelate epimerase family. In terms of assembly, homodimer.

The protein localises to the cytoplasm. The enzyme catalyses (2S,6S)-2,6-diaminopimelate = meso-2,6-diaminopimelate. The protein operates within amino-acid biosynthesis; L-lysine biosynthesis via DAP pathway; DL-2,6-diaminopimelate from LL-2,6-diaminopimelate: step 1/1. Functionally, catalyzes the stereoinversion of LL-2,6-diaminopimelate (L,L-DAP) to meso-diaminopimelate (meso-DAP), a precursor of L-lysine and an essential component of the bacterial peptidoglycan. The polypeptide is Diaminopimelate epimerase (Bacillus anthracis (strain A0248)).